A 478-amino-acid chain; its full sequence is Membrane-bound lytic murein transglycosylase F (478 aa).

Residues 1–22 form the signal peptide; that stretch reads MTRFLFAIILGFLLTACQQVTV. Residues 23–257 are non-LT domain; that stretch reads EETEYVPHKL…HLNEKYFGHV (235 aa). The tract at residues 258–478 is LT domain; sequence KRFDYIDTRA…PGTLSPDKPK (221 aa). Residue glutamate 302 is part of the active site. Residues 446 to 478 form a disordered region; that stretch reads SKQQNSDEEEPSDLASEDGPAPVPGTLSPDKPK. Residues 451–461 show a composition bias toward acidic residues; the sequence is SDEEEPSDLAS.

In the N-terminal section; belongs to the bacterial solute-binding protein 3 family. This sequence in the C-terminal section; belongs to the transglycosylase Slt family.

It is found in the cell outer membrane. It catalyses the reaction Exolytic cleavage of the (1-&gt;4)-beta-glycosidic linkage between N-acetylmuramic acid (MurNAc) and N-acetylglucosamine (GlcNAc) residues in peptidoglycan, from either the reducing or the non-reducing ends of the peptidoglycan chains, with concomitant formation of a 1,6-anhydrobond in the MurNAc residue.. Its function is as follows. Murein-degrading enzyme that degrades murein glycan strands and insoluble, high-molecular weight murein sacculi, with the concomitant formation of a 1,6-anhydromuramoyl product. Lytic transglycosylases (LTs) play an integral role in the metabolism of the peptidoglycan (PG) sacculus. Their lytic action creates space within the PG sacculus to allow for its expansion as well as for the insertion of various structures such as secretion systems and flagella. The chain is Membrane-bound lytic murein transglycosylase F from Shewanella sp. (strain MR-4).